We begin with the raw amino-acid sequence, 534 residues long: UDP-glucuronosyltransferase 1A5 (534 aa).

The first 28 residues, 1–28 (MATGLQVPLPQLATGLLLLLSVQPWAES), serve as a signal peptide directing secretion. 3 N-linked (GlcNAc...) asparagine glycosylation sites follow: asparagine 119, asparagine 296, and asparagine 348. The chain crosses the membrane as a helical span at residues 492–508 (VIGFLLAVVLTVAFITF).

It belongs to the UDP-glycosyltransferase family. As to quaternary structure, homodimer. Homooligomer. Interacts with UGT1A1, UGT1A3, UGT1A4, UGT1A6, UGT1A7, UGT1A8, UGT1A9 and UGT1A10 to form heterodimers. Isoform 1 interacts with isoform 2/i2 suggesting that oligomerization is involved in negative regulation of transferase activity by isoform 2. Isoform 1 also interacts with respective i2 isoforms of UGT1A1, UGT1A3, UGT1A4, UGT1A6, UGT1A7, UGT1A8, UGT1A9 and UGT1A10. In terms of tissue distribution, isoform 1 and isoform 2 are expressed in colon and small intestine. Neither isoform is expressed in liver, kidney or esophagus.

It localises to the endoplasmic reticulum membrane. The catalysed reaction is glucuronate acceptor + UDP-alpha-D-glucuronate = acceptor beta-D-glucuronoside + UDP + H(+). It catalyses the reaction zolasartan + UDP-alpha-D-glucuronate = zolarsartan-1-N-beta-D-glucuronide + UDP. Its function is as follows. UDP-glucuronosyltransferase (UGT) that catalyzes phase II biotransformation reactions in which lipophilic substrates are conjugated with glucuronic acid to increase the metabolite's water solubility, thereby facilitating excretion into either the urine or bile. Essential for the elimination and detoxification of drugs, xenobiotics and endogenous compounds. Involved in the glucuronidation of the AGTR1 angiotensin receptor antagonist zolarsatan, a drug which can inhibit the effect of angiotensin II. Functionally, lacks UGT glucuronidation activity but acts as a negative regulator of isoform 1. The chain is UDP-glucuronosyltransferase 1A5 from Homo sapiens (Human).